The following is a 347-amino-acid chain: S-adenosylmethionine:tRNA ribosyltransferase-isomerase (347 aa).

It belongs to the QueA family. As to quaternary structure, monomer.

The protein resides in the cytoplasm. The enzyme catalyses 7-aminomethyl-7-carbaguanosine(34) in tRNA + S-adenosyl-L-methionine = epoxyqueuosine(34) in tRNA + adenine + L-methionine + 2 H(+). It participates in tRNA modification; tRNA-queuosine biosynthesis. Transfers and isomerizes the ribose moiety from AdoMet to the 7-aminomethyl group of 7-deazaguanine (preQ1-tRNA) to give epoxyqueuosine (oQ-tRNA). The protein is S-adenosylmethionine:tRNA ribosyltransferase-isomerase of Xylella fastidiosa (strain M12).